The sequence spans 250 residues: Isoprenyl transferase (250 aa).

The active site involves D27. D27 contacts Mg(2+). Substrate-binding positions include 28–31 (GNRR), W32, H48, and 76–78 (STE). The active-site Proton acceptor is the N79. Residues F80, R82, R199, and 205–207 (RVS) contribute to the substrate site. A Mg(2+)-binding site is contributed by E218.

The protein belongs to the UPP synthase family. As to quaternary structure, homodimer. Mg(2+) is required as a cofactor.

Functionally, catalyzes the condensation of isopentenyl diphosphate (IPP) with allylic pyrophosphates generating different type of terpenoids. The chain is Isoprenyl transferase from Chlamydia pneumoniae (Chlamydophila pneumoniae).